A 93-amino-acid polypeptide reads, in one-letter code: DNA-directed RNA polymerase subunit omega (93 aa).

The protein belongs to the RNA polymerase subunit omega family. In terms of assembly, the RNAP catalytic core consists of 2 alpha, 1 beta, 1 beta' and 1 omega subunit. When a sigma factor is associated with the core the holoenzyme is formed, which can initiate transcription.

The enzyme catalyses RNA(n) + a ribonucleoside 5'-triphosphate = RNA(n+1) + diphosphate. Functionally, promotes RNA polymerase assembly. Latches the N- and C-terminal regions of the beta' subunit thereby facilitating its interaction with the beta and alpha subunits. This Glaesserella parasuis serovar 5 (strain SH0165) (Haemophilus parasuis) protein is DNA-directed RNA polymerase subunit omega.